We begin with the raw amino-acid sequence, 542 residues long: Cytochrome P450 27C1 (542 aa).

The N-terminal 80 residues, 1-80 (MQTSAMALLA…LAAMPGPRTL (80 aa)), are a transit peptide targeting the mitochondrion. The interval 20-75 (APERGGLLGGGAPRRPQPAGARLPAGARAEDKGAGRPGSPPGGGRAEGPRSLAAMP) is disordered. The span at 32-46 (PRRPQPAGARLPAGA) shows a compositional bias: low complexity. Cysteine 488 contacts heme.

This sequence belongs to the cytochrome P450 family. Requires heme as cofactor. In terms of tissue distribution, widely expressed, with highest levels in the liver, kidney and pancreas. As to expression, expressed in the skin (at protein level).

The protein resides in the mitochondrion membrane. The catalysed reaction is all-trans-retinol + 2 reduced [adrenodoxin] + O2 + 2 H(+) = all-trans-3,4-didehydroretinol + 2 oxidized [adrenodoxin] + 2 H2O. It catalyses the reaction all-trans-retinol + 2 reduced [adrenodoxin] + O2 + 2 H(+) = all-trans-4-hydroxyretinol + 2 oxidized [adrenodoxin] + H2O. The enzyme catalyses all-trans-retinol + 2 reduced [adrenodoxin] + O2 + 2 H(+) = all-trans-3-hydroxyretinol + 2 oxidized [adrenodoxin] + H2O. It functions in the pathway cofactor metabolism; retinol metabolism. Its function is as follows. A cytochrome P450 monooxygenase that catalyzes the 3,4 desaturation of all-trans-retinol (also called vitamin A1) to all-trans-3,4-didehydroretinol (also called vitamin A2) in the skin. Desaturates with lower efficiency all-trans retinal and all-trans retinoic acid. Forms minor amounts of 3-hydroxy and 4-hydroxy all-trans-retinol derivatives. Mechanistically, uses molecular oxygen inserting one oxygen atom into a substrate and reducing the second into a water molecule. Two electrons are provided by NADPH via a two-protein mitochondrial transfer system comprising flavoprotein FDXR (adrenodoxin/ferredoxin reductase) and nonheme iron-sulfur protein FDX1 or FDX2 (adrenodoxin/ferredoxin). The protein is Cytochrome P450 27C1 of Homo sapiens (Human).